Reading from the N-terminus, the 609-residue chain is Alpha-fetoprotein (609 aa).

The signal sequence occupies residues 1 to 18; sequence MKWVVSILLIFLLNSTES. 3 Albumin domains span residues 19 to 210, 211 to 402, and 403 to 601; these read RTMH…ATIT, KELR…EELQ, and KYIQ…QLIS. A Cu(2+)-binding site is contributed by histidine 22. Intrachain disulfides connect cysteine 99-cysteine 114, cysteine 113-cysteine 124, cysteine 148-cysteine 193, cysteine 192-cysteine 201, cysteine 224-cysteine 270, cysteine 269-cysteine 277, cysteine 289-cysteine 303, and cysteine 302-cysteine 313. 2 positions are modified to phosphoserine: serine 111 and serine 115. Asparagine 251 is a glycosylation site (N-linked (GlcNAc...) asparagine). Serine 344 is subject to Phosphoserine. Disulfide bonds link cysteine 384/cysteine 393, cysteine 416/cysteine 462, cysteine 461/cysteine 472, cysteine 485/cysteine 501, cysteine 500/cysteine 511, cysteine 538/cysteine 583, and cysteine 582/cysteine 591.

It belongs to the ALB/AFP/VDB family. Dimeric and trimeric forms have been found in addition to the monomeric form. In terms of processing, sulfated. Plasma.

The protein resides in the secreted. In terms of biological role, binds copper, nickel, and fatty acids as well as, and bilirubin less well than, serum albumin. In Equus caballus (Horse), this protein is Alpha-fetoprotein (AFP).